Here is a 542-residue protein sequence, read N- to C-terminus: CTP synthase (542 aa).

Residues Met-1–Met-265 are amidoligase domain. Ser-13 provides a ligand contact to CTP. Ser-13 provides a ligand contact to UTP. Residues Ser-14–Leu-19 and Asp-71 each bind ATP. Residues Asp-71 and Glu-139 each contribute to the Mg(2+) site. Residues Asp-146–Glu-148, Lys-186–Gln-191, and Lys-222 contribute to the CTP site. UTP is bound by residues Lys-186–Gln-191 and Lys-222. Arg-238–Val-240 serves as a coordination point for ATP. A Glutamine amidotransferase type-1 domain is found at Thr-291–Leu-541. Gly-353 contacts L-glutamine. Residue Cys-380 is the Nucleophile; for glutamine hydrolysis of the active site. Residues Phe-381–Gln-384, Glu-404, and Arg-469 contribute to the L-glutamine site. Residues His-514 and Glu-516 contribute to the active site.

Belongs to the CTP synthase family. Homotetramer.

The enzyme catalyses UTP + L-glutamine + ATP + H2O = CTP + L-glutamate + ADP + phosphate + 2 H(+). It carries out the reaction L-glutamine + H2O = L-glutamate + NH4(+). The catalysed reaction is UTP + NH4(+) + ATP = CTP + ADP + phosphate + 2 H(+). Its pathway is pyrimidine metabolism; CTP biosynthesis via de novo pathway; CTP from UDP: step 2/2. Allosterically activated by GTP, when glutamine is the substrate; GTP has no effect on the reaction when ammonia is the substrate. The allosteric effector GTP functions by stabilizing the protein conformation that binds the tetrahedral intermediate(s) formed during glutamine hydrolysis. Inhibited by the product CTP, via allosteric rather than competitive inhibition. Its function is as follows. Catalyzes the ATP-dependent amination of UTP to CTP with either L-glutamine or ammonia as the source of nitrogen. Regulates intracellular CTP levels through interactions with the four ribonucleotide triphosphates. The protein is CTP synthase of Methylorubrum populi (strain ATCC BAA-705 / NCIMB 13946 / BJ001) (Methylobacterium populi).